The primary structure comprises 408 residues: DNA polymerase processivity factor (408 aa).

Residues 344–353 (KKRRNLLTKR) carry the Nuclear localization signal motif.

It belongs to the herpesviridae DNA polymerase processivity factor family. In terms of assembly, interacts with the DNA polymerase catalytic subunit. Interacts with the origin-binding protein.

Its subcellular location is the host nucleus. Its function is as follows. Plays an essential role in viral DNA replication by acting as the polymerase accessory subunit. Associates with the viral polymerase to increase its processivity and forms high-affinity direct interactions with DNA. Facilitates the origin-binding protein loading onto DNA thus increasing its ability to assemble into a functional complex capable of unwinding duplex DNA. The polypeptide is DNA polymerase processivity factor (Varicella-zoster virus (strain Oka vaccine) (HHV-3)).